The chain runs to 63 residues: Large ribosomal subunit protein uL29 (63 aa).

It belongs to the universal ribosomal protein uL29 family.

The protein is Large ribosomal subunit protein uL29 of Photorhabdus laumondii subsp. laumondii (strain DSM 15139 / CIP 105565 / TT01) (Photorhabdus luminescens subsp. laumondii).